A 123-amino-acid chain; its full sequence is Ragulator complex protein LAMTOR3-A (123 aa).

Belongs to the LAMTOR3 family. As to quaternary structure, part of the Ragulator complex composed of lamtor1, lamtor2, lamtor3, lamtor4 and lamtor5. The Ragulator complex interacts with slc38a9; the probable amino acid sensor. Component of the lysosomal folliculin complex (LFC).

The protein localises to the late endosome membrane. Its function is as follows. As part of the Ragulator complex it is involved in amino acid sensing and activation of mTORC1, a signaling complex promoting cell growth in response to growth factors, energy levels, and amino acids. Activated by amino acids through a mechanism involving the lysosomal V-ATPase, the Ragulator plays a dual role for the small GTPases Rag (RagA/RRAGA, RagB/RRAGB, RagC/RRAGC and/or RagD/RRAGD): it (1) acts as a guanine nucleotide exchange factor (GEF), activating the small GTPases Rag and (2) mediates recruitment of Rag GTPases to the lysosome membrane. Activated Ragulator and Rag GTPases function as a scaffold recruiting mTORC1 to lysosomes where it is in turn activated. In Xenopus laevis (African clawed frog), this protein is Ragulator complex protein LAMTOR3-A (lamtor3-a).